The primary structure comprises 89 residues: uncharacterized protein (89 aa).

It to M.tuberculosis Rv3402c.

This is an uncharacterized protein from Mycobacterium tuberculosis (strain CDC 1551 / Oshkosh).